We begin with the raw amino-acid sequence, 356 residues long: Acyl-coenzyme A diphosphatase NUDT19 (356 aa).

One can recognise a Nudix hydrolase domain in the interval 10-241; the sequence is AATVMLAAGW…IWLAPPQFYE (232 aa). Residues 72-94 form a disordered region; that stretch reads PRFGLGPEPPRQPPFPGLSHGDA. Pro residues predominate over residues 78–87; sequence PEPPRQPPFP. The Nudix box signature appears at 97–118; it reads AALPDDVALRICAIRETFEEAG. Mg(2+) contacts are provided by E112 and E116. K299 is modified (N6-succinyllysine). A Microbody targeting signal motif is present at residues 354–356; it reads ARL.

Belongs to the Nudix hydrolase family. In terms of assembly, monomer. It depends on Mg(2+) as a cofactor. Mn(2+) is required as a cofactor.

Its subcellular location is the peroxisome. It carries out the reaction an acyl-CoA + H2O = an acyl-4'-phosphopantetheine + adenosine 3',5'-bisphosphate + 2 H(+). The enzyme catalyses CoA + H2O = (R)-4'-phosphopantetheine + adenosine 3',5'-bisphosphate + 2 H(+). It catalyses the reaction hexanoyl-CoA + H2O = hexanoyl-4'-phosphopantetheine + adenosine 3',5'-bisphosphate + 2 H(+). The catalysed reaction is octanoyl-CoA + H2O = S-octanoyl-4'-phosphopantetheine + adenosine 3',5'-bisphosphate + 2 H(+). It carries out the reaction butanoyl-CoA + H2O = S-butanoyl-4'-phosphopantetheine + adenosine 3',5'-bisphosphate + 2 H(+). The enzyme catalyses propanoyl-CoA + H2O = propanoyl-4'-phosphopantetheine + adenosine 3',5'-bisphosphate + 2 H(+). It catalyses the reaction malonyl-CoA + H2O = malonyl-4'-phosphopantetheine + adenosine 3',5'-bisphosphate + 2 H(+). The catalysed reaction is succinyl-CoA + H2O = succinyl-4'-phosphopantetheine + adenosine 3',5'-bisphosphate + 2 H(+). It carries out the reaction choloyl-CoA + H2O = S-choloyl-4'-phosphopantetheine + adenosine 3',5'-bisphosphate + 2 H(+). The enzyme catalyses 4,8-dimethylnonanoyl-CoA + H2O = S-(4,8-dimethylnonanoyl)-4'-phosphopantetheine + adenosine 3',5'-bisphosphate + 2 H(+). It catalyses the reaction (9Z,12Z,15Z)-octadecatrienoyl-CoA + H2O = S-(9Z,12Z,15Z-octadecatrienoyl)-4'-phosphopantetheine + adenosine 3',5'-bisphosphate + 2 H(+). The catalysed reaction is (9Z,12Z)-octadecadienoyl-CoA + H2O = S-(9Z,12Z-octadecadienoyl)-4'-phosphopantetheine + adenosine 3',5'-bisphosphate + 2 H(+). It carries out the reaction (9Z)-hexadecenoyl-CoA + H2O = S-(9Z-hexadecenoyl)-4'-phosphopantetheine + adenosine 3',5'-bisphosphate + 2 H(+). The enzyme catalyses (9Z)-tetradecenoyl-CoA + H2O = S-(9Z-tetradecenoyl)-4'-phosphopantetheine + adenosine 3',5'-bisphosphate + 2 H(+). It catalyses the reaction (6Z)-octenoyl-CoA + H2O = S-(6Z-octenoyl)-4'-phosphopantetheine + adenosine 3',5'-bisphosphate + 2 H(+). The catalysed reaction is hexadecanoyl-CoA + H2O = S-hexadecanoyl-4'-phosphopantetheine + adenosine 3',5'-bisphosphate + 2 H(+). It carries out the reaction tetradecanoyl-CoA + H2O = tetradecanoyl-4'-phosphopantetheine + adenosine 3',5'-bisphosphate + 2 H(+). The enzyme catalyses dodecanoyl-CoA + H2O = S-dodecanoyl-4'-phosphopantetheine + adenosine 3',5'-bisphosphate + 2 H(+). It catalyses the reaction a 5'-end CoA-ribonucleoside in mRNA + H2O = a 5'-end phospho-adenosine-phospho-ribonucleoside in mRNA + (R)-4'-phosphopantetheine + 2 H(+). Its function is as follows. Fatty acyl-coenzyme A (CoA) diphosphatase that hydrolyzes fatty acyl-CoA to yield acyl-4'-phosphopantetheine and adenosine 3',5'-bisphosphate. Mediates the hydrolysis of a wide range of CoA esters, including choloyl-CoA and branched-chain fatty-acyl-CoA esters and at low substrate concentrations medium and long-chain fatty-acyl-CoA esters are the primary substrates. Highest activity seen with medium-chain acyl-CoA esters and higher rates of activity seen with the unsaturated acyl-CoA esters compared with the saturated esters. Exhibits decapping activity towards dpCoA-capped RNAs in vitro. This Mus saxicola (Brown spiny mouse) protein is Acyl-coenzyme A diphosphatase NUDT19 (Nudt19).